We begin with the raw amino-acid sequence, 338 residues long: Heat-inducible transcription repressor HrcA (338 aa).

Belongs to the HrcA family.

Functionally, negative regulator of class I heat shock genes (grpE-dnaK-dnaJ and groELS operons). Prevents heat-shock induction of these operons. The polypeptide is Heat-inducible transcription repressor HrcA (Streptomyces albus G).